The sequence spans 311 residues: Protoheme IX farnesyltransferase (311 aa).

The next 9 helical transmembrane spans lie at 33 to 53 (VVML…PSPA), 55 to 75 (LWLL…AAAV), 104 to 124 (NALL…SSFI), 127 to 147 (LTAW…TLFL), 155 to 175 (IVIG…AVTG), 181 to 201 (GLLL…ALAL), 228 to 248 (IVLY…TRMM), 252 to 272 (YLVG…KLLV), and 287 to 307 (IIYL…FPIP).

This sequence belongs to the UbiA prenyltransferase family. Protoheme IX farnesyltransferase subfamily.

It is found in the cell inner membrane. The catalysed reaction is heme b + (2E,6E)-farnesyl diphosphate + H2O = Fe(II)-heme o + diphosphate. It participates in porphyrin-containing compound metabolism; heme O biosynthesis; heme O from protoheme: step 1/1. Converts heme B (protoheme IX) to heme O by substitution of the vinyl group on carbon 2 of heme B porphyrin ring with a hydroxyethyl farnesyl side group. In Teredinibacter turnerae (strain ATCC 39867 / T7901), this protein is Protoheme IX farnesyltransferase.